The chain runs to 547 residues: Alpha-1,3-mannosyl-glycoprotein 4-beta-N-acetylglucosaminyltransferase B (547 aa).

Residues 1–7 lie on the Cytoplasmic side of the membrane; that stretch reads MRLRNGT. Residues 8–28 form a helical; Signal-anchor for type II membrane protein membrane-spanning segment; the sequence is FLTVLLFGLCGLISLSWYTAF. Over 29–547 the chain is Lumenal; it reads SNSKGNVVDI…LSEIFIKKAE (519 aa). Residues 36–83 are a coiled coil; that stretch reads VDIYQREFLALRDRLHSAEQENLKRSKELNLVLDEIKRAIAEKQALRD. Residues Asn85, Asn101, and Asn464 are each glycosylated (N-linked (GlcNAc...) asparagine).

It belongs to the glycosyltransferase 54 family. A divalent metal cation is required as a cofactor. Post-translationally, N-glycosylated.

It is found in the golgi apparatus membrane. The enzyme catalyses N(4)-{beta-D-GlcNAc-(1-&gt;2)-alpha-D-Man-(1-&gt;3)-[beta-D-GlcNAc-(1-&gt;2)-alpha-D-Man-(1-&gt;6)]-beta-D-Man-(1-&gt;4)-beta-D-GlcNAc-(1-&gt;4)-beta-D-GlcNAc}-L-asparaginyl-[protein] + UDP-N-acetyl-alpha-D-glucosamine = N(4)-{beta-D-GlcNAc-(1-&gt;2)-[beta-D-GlcNAc-(1-&gt;4)]-alpha-D-Man-(1-&gt;3)-[beta-D-GlcNAc-(1-&gt;2)-alpha-D-Man-(1-&gt;6)]-beta-D-Man-(1-&gt;4)-beta-D-GlcNAc-(1-&gt;4)-beta-D-GlcNAc}-L-asparaginyl-[protein] + UDP + H(+). The catalysed reaction is an N(4)-{beta-D-GlcNAc-(1-&gt;2)-alpha-D-Man-(1-&gt;3)-[alpha-D-Man-(1-&gt;6)]-beta-D-Man-(1-&gt;4)-beta-D-GlcNAc-(1-&gt;4)-beta-D-GlcNAc}-L-asparaginyl-[protein] + UDP-N-acetyl-alpha-D-glucosamine = an N(4)-{beta-D-GlcNAc-(1-&gt;2)-[beta-D-GlcNAc-(1-&gt;4)]-alpha-D-Man-(1-&gt;3)-[alpha-D-Man-(1-&gt;6)]-beta-D-Man-(1-&gt;4)-beta-D-GlcNAc-(1-&gt;4)-beta-D-GlcNAc}-L-asparaginyl-[protein] + UDP + H(+). It catalyses the reaction an N(4)-{beta-D-GlcNAc-(1-&gt;2)-alpha-D-Man-(1-&gt;3)-[beta-D-GlcNAc-(1-&gt;2)-[beta-D-GlcNAc-(1-&gt;6)]-alpha-D-Man-(1-&gt;6)]-beta-D-Man-(1-&gt;4)-beta-D-GlcNAc-(1-&gt;4)-beta-D-GlcNAc}-L-asparaginyl-[protein] + UDP-N-acetyl-alpha-D-glucosamine = an N(4)-{beta-D-GlcNAc-(1-&gt;2)-[beta-D-GlcNAc-(1-&gt;4)]-alpha-D-Man-(1-&gt;3)-[beta-D-GlcNAc-(1-&gt;2)-[beta-D-GlcNAc-(1-&gt;6)]-alpha-D-Man-(1-&gt;6)]-beta-D-Man-(1-&gt;4)-beta-D-GlcNAc-(1-&gt;4)-beta-D-GlcNAc}-L-asparaginyl-[protein] + UDP + H(+). It carries out the reaction an N(4)-{beta-D-GlcNAc-(1-&gt;2)-alpha-D-Man-(1-&gt;3)-[beta-D-GlcNAc-(1-&gt;2)-alpha-D-Man-(1-&gt;6)]-beta-D-Man-(1-&gt;4)-beta-D-GlcNAc-(1-&gt;4)-[alpha-L-Fuc-(1-&gt;6)]-beta-D-GlcNAc}-L-asparaginyl-[protein] + UDP-N-acetyl-alpha-D-glucosamine = N(4)-{beta-D-GlcNAc-(1-&gt;2)-[beta-D-GlcNAc-(1-&gt;4)]-alpha-D-Man-(1-&gt;3)-[beta-D-GlcNAc-(1-&gt;2)-alpha-D-Man-(1-&gt;6)]-beta-D-Man-(1-&gt;4)-beta-D-GlcNAc-(1-&gt;4)-[alpha-L-Fuc-(1-&gt;6)]-beta-D-GlcNAc}-asparaginyl-[protein] + UDP + H(+). The enzyme catalyses an N(4)-{beta-D-GlcNAc-(1-&gt;2)-alpha-D-Man-(1-&gt;3)-[beta-D-Gal-(1-&gt;4)-beta-D-GlcNAc-(1-&gt;2)-alpha-D-Man-(1-&gt;6)]-beta-D-Man-(1-&gt;4)-beta-D-GlcNAc-(1-&gt;4)-beta-D-GlcNAc}-L-asparaginyl-[protein] + UDP-N-acetyl-alpha-D-glucosamine = an N(4)-{beta-D-GlcNAc-(1-&gt;2)-[beta-D-GlcNAc-(1-&gt;4)]-alpha-D-Man-(1-&gt;3)-[beta-D-Gal-(1-&gt;4)-beta-D-GlcNAc-(1-&gt;2)-alpha-D-Man-(1-&gt;6)]-beta-D-Man-(1-&gt;4)-beta-D-GlcNAc-(1-&gt;4)-beta-D-GlcNAc}-L-asparaginyl-[protein] + UDP + H(+). The catalysed reaction is N(4)-{beta-D-GlcNAc-(1-&gt;2)-alpha-D-Man-(1-&gt;3)-[alpha-D-Man-(1-&gt;3)-{alpha-D-Man-(1-&gt;6)}-alpha-D-Man-(1-&gt;6)]-beta-D-Man-(1-&gt;4)-beta-D-GlcNAc-(1-&gt;4)-beta-D-GlcNAc}-asparaginyl-[protein] + UDP-N-acetyl-alpha-D-glucosamine = N(4)-{beta-D-GlcNAc-(1-&gt;2)-[beta-D-GlcNAc-(1-&gt;4)]-alpha-D-Man-(1-&gt;3)-[alpha-D-Man-(1-&gt;3)-{alpha-D-Man-(1-&gt;6)}-alpha-D-Man-(1-&gt;6)]-beta-D-Man-(1-&gt;4)-beta-D-GlcNAc-(1-&gt;4)-beta-D-GlcNAc}-asparaginyl-[protein] + UDP + H(+). It catalyses the reaction N(4)-{beta-D-GlcNAc-(1-&gt;2)-alpha-D-Man-(1-&gt;3)-beta-D-Man-(1-&gt;4)-beta-D-GlcNAc-(1-&gt;4)-beta-D-GlcNAc}-asparaginyl-[protein] + UDP-N-acetyl-alpha-D-glucosamine = N(4)-{beta-D-GlcNAc-(1-&gt;2)-[beta-D-GlcNAc-(1-&gt;4)]-alpha-D-Man-(1-&gt;3)-beta-D-Man-(1-&gt;4)-beta-D-GlcNAc-(1-&gt;4)-beta-D-GlcNAc}-asparaginyl-[protein] + UDP + H(+). The protein operates within protein modification; protein glycosylation. Functionally, glycosyltransferase that catalyze the transfer of GlcNAc from UDP-GlcNAc to the GlcNAcbeta1-2Manalpha1-3 arm of the core structure of N-linked glycans through a beta1-4 linkage and participates in the production of tri- and tetra-antennary N-linked sugar chains. Prefers complex-type N-glycans over hybrid-types. Has lower affinities for donors or acceptors than MGAT4A, suggesting that, under physiological conditions, it is not the main contributor in N-glycan biosynthesis. The chain is Alpha-1,3-mannosyl-glycoprotein 4-beta-N-acetylglucosaminyltransferase B (mgat4bQ9UQ53) from Danio rerio (Zebrafish).